A 268-amino-acid polypeptide reads, in one-letter code: Trypsin-like protease (268 aa).

The N-terminal stretch at 1–41 (MTHTTTIAAKRGGLALAKKAAAAGAVALAVASLQPVSAAHA) is a signal peptide. Positions 42–45 (ADAR) are cleaved as a propeptide — activation peptide. Residues 46 to 266 (VIGGKPAAQN…FAKDIAKAAS (221 aa)) enclose the Peptidase S1 domain. Cysteines 67 and 83 form a disulfide. Active-site charge relay system residues include His82 and Asp127. Intrachain disulfides connect Cys187/Cys202 and Cys213/Cys242. Ser217 (charge relay system) is an active-site residue.

The protein belongs to the peptidase S1 family.

Functionally, protease that shows preferential cleavage after Arg and Lys residues. This Streptomyces glaucescens protein is Trypsin-like protease.